A 52-amino-acid polypeptide reads, in one-letter code: UPF0391 membrane protein XOO4217 (52 aa).

Transmembrane regions (helical) follow at residues 5-25 (AMIF…GIAG) and 27-47 (ATNI…ISMF).

The protein belongs to the UPF0391 family.

The protein localises to the cell membrane. This chain is UPF0391 membrane protein XOO4217, found in Xanthomonas oryzae pv. oryzae (strain KACC10331 / KXO85).